The primary structure comprises 514 residues: Putative exoglucanase type C (514 aa).

Positions 1–17 are cleaved as a signal peptide; that stretch reads MYRIVATASALIAAARA. Residues 18 to 439 form a catalytic region; the sequence is QQVCSLNTET…RDVPNSKVSF (422 aa). Glu-229 acts as the Nucleophile in catalysis. Catalysis depends on Glu-234, which acts as the Proton donor. A glycan (N-linked (GlcNAc...) asparagine) is linked at Asn-287. A compositionally biased stretch (polar residues) spans 408-424; the sequence is STKVGSQRGSCATTSGK. Disordered stretches follow at residues 408-433 and 448-485; these read STKV…RDVP and GSTY…QWGQ. Positions 440–482 are linker; that stretch reads SNIKFGPIGSTYKSDGTTPNPPASSSTTGSSTPTNPPAGSVDQ. Over residues 462–479 the composition is skewed to low complexity; sequence ASSSTTGSSTPTNPPAGS. Positions 478-514 constitute a CBM1 domain; it reads GSVDQWGQCGGQNYSGPTTCKSPFTCKKINDFYSQCQ. Intrachain disulfides connect Cys-486–Cys-503 and Cys-497–Cys-513. Asn-490 carries N-linked (GlcNAc...) asparagine glycosylation.

This sequence belongs to the glycosyl hydrolase 7 (cellulase C) family.

The enzyme catalyses Hydrolysis of (1-&gt;4)-beta-D-glucosidic linkages in cellulose and cellotetraose, releasing cellobiose from the non-reducing ends of the chains.. The sequence is that of Putative exoglucanase type C from Fusarium oxysporum (Fusarium vascular wilt).